The primary structure comprises 400 residues: Bifunctional enzyme IspD/IspF (400 aa).

Positions 1–240 are 2-C-methyl-D-erythritol 4-phosphate cytidylyltransferase; it reads MQESTMKFGI…EKLSHALPDV (240 aa). The interval 241 to 400 is 2-C-methyl-D-erythritol 2,4-cyclodiphosphate synthase; it reads RTGNGYDVHQ…ATVVYQGRPL (160 aa). Positions 247 and 249 each coordinate a divalent metal cation. Residues 247-249 and 273-274 contribute to the 4-CDP-2-C-methyl-D-erythritol 2-phosphate site; these read DVH and HS. H281 contacts a divalent metal cation. 4-CDP-2-C-methyl-D-erythritol 2-phosphate contacts are provided by residues 295-297, 371-374, F378, and R381; these read DIG and TTNE.

It in the N-terminal section; belongs to the IspD/TarI cytidylyltransferase family. IspD subfamily. The protein in the C-terminal section; belongs to the IspF family. It depends on a divalent metal cation as a cofactor.

It carries out the reaction 2-C-methyl-D-erythritol 4-phosphate + CTP + H(+) = 4-CDP-2-C-methyl-D-erythritol + diphosphate. The enzyme catalyses 4-CDP-2-C-methyl-D-erythritol 2-phosphate = 2-C-methyl-D-erythritol 2,4-cyclic diphosphate + CMP. Its pathway is isoprenoid biosynthesis; isopentenyl diphosphate biosynthesis via DXP pathway; isopentenyl diphosphate from 1-deoxy-D-xylulose 5-phosphate: step 2/6. It functions in the pathway isoprenoid biosynthesis; isopentenyl diphosphate biosynthesis via DXP pathway; isopentenyl diphosphate from 1-deoxy-D-xylulose 5-phosphate: step 4/6. Its function is as follows. Bifunctional enzyme that catalyzes the formation of 4-diphosphocytidyl-2-C-methyl-D-erythritol from CTP and 2-C-methyl-D-erythritol 4-phosphate (MEP) (IspD), and catalyzes the conversion of 4-diphosphocytidyl-2-C-methyl-D-erythritol 2-phosphate (CDP-ME2P) to 2-C-methyl-D-erythritol 2,4-cyclodiphosphate (ME-CPP) with a corresponding release of cytidine 5-monophosphate (CMP) (IspF). This chain is Bifunctional enzyme IspD/IspF, found in Agrobacterium fabrum (strain C58 / ATCC 33970) (Agrobacterium tumefaciens (strain C58)).